The following is a 336-amino-acid chain: NAC domain-containing protein 100 (336 aa).

An NAC domain is found at 16–166; that stretch reads LPPGFRFHPT…EWVICRVFQK (151 aa). Residues 113–172 mediate DNA binding; it reads VGMKKTLVFYRGRAPKGQKTNWVMHEYRLEGKFSAHNLPKTAKNEWVICRVFQKSAGGKK. The tract at residues 313–336 is disordered; the sequence is RRFDSQEDPSSSTGPVDLEPFWNY.

Its subcellular location is the nucleus. Functionally, binds to the promoter regions of genes involved in chlorophyll catabolic processes, such as NYC1, SGR1, SGR2 and PAO. The sequence is that of NAC domain-containing protein 100 from Arabidopsis thaliana (Mouse-ear cress).